The primary structure comprises 336 residues: Transcription factor MYB29 (336 aa).

HTH myb-type domains lie at 9–65 (GEGL…KPDI) and 66–116 (KRGE…KKLL). 2 DNA-binding regions (H-T-H motif) span residues 37–61 (WRDI…ANYL) and 89–112 (WSVI…NTHL). Residues 127–170 (KPLAYDSNPDEQSQSGSISPKSLPPSSSKNVPEITSSDETPKYD) are disordered. Residues 141–154 (SGSISPKSLPPSSS) show a composition bias toward low complexity. Residues 155 to 164 (KNVPEITSSD) show a composition bias toward polar residues.

Can form complexes with MYC2, MYC3 or MYC4. In terms of tissue distribution, expressed in both vegetative and generative organs. Mostly present in seedlings, inflorescences, roots and stems, and, to a lower extent, in leaves (in midvein and trichomes) and siliques.

Its subcellular location is the nucleus. In terms of biological role, plays a minor rheostat role in aliphatic glucosinolates (GLSs) biosynthesis, mostly short chained. Together with MYB28/HAG1 and MYB76/HAG2, promotes aliphatic glucosinolate biosynthesis but represses indolic glucosinolate biosynthesis. Prevents insect performance (e.g. lepidopteran insect Mamestra brassicae) by promoting glucosinolates. The chain is Transcription factor MYB29 (MYB29) from Arabidopsis thaliana (Mouse-ear cress).